Consider the following 250-residue polypeptide: 3-deoxy-manno-octulosonate cytidylyltransferase (250 aa).

It belongs to the KdsB family.

Its subcellular location is the cytoplasm. It carries out the reaction 3-deoxy-alpha-D-manno-oct-2-ulosonate + CTP = CMP-3-deoxy-beta-D-manno-octulosonate + diphosphate. It participates in nucleotide-sugar biosynthesis; CMP-3-deoxy-D-manno-octulosonate biosynthesis; CMP-3-deoxy-D-manno-octulosonate from 3-deoxy-D-manno-octulosonate and CTP: step 1/1. It functions in the pathway bacterial outer membrane biogenesis; lipopolysaccharide biosynthesis. Activates KDO (a required 8-carbon sugar) for incorporation into bacterial lipopolysaccharide in Gram-negative bacteria. This Legionella pneumophila subsp. pneumophila (strain Philadelphia 1 / ATCC 33152 / DSM 7513) protein is 3-deoxy-manno-octulosonate cytidylyltransferase.